The primary structure comprises 175 residues: Coagulogen (175 aa).

8 disulfide bridges follow: Cys-8/Cys-167, Cys-10/Cys-95, Cys-60/Cys-161, Cys-65/Cys-121, Cys-75/Cys-168, Cys-88/Cys-140, Cys-127/Cys-170, and Cys-134/Cys-172.

It belongs to the coagulin family. As to quaternary structure, coagulogen is cleaved after Arg-18 and Arg-46 by a clotting enzyme contained in the hemocyte and activated by a bacterial endotoxin (lipopolysaccharide). This cleavage releases the peptide C and leaves 2 chains of coagulin, A and B, linked by two disulfide bonds. Coagulin molecules interlink to form a gel. As to expression, hemolymph.

Its subcellular location is the secreted. Coagulogen is a gel-forming protein of hemolymph; it hinders the spread of invaders by immobilizing them. This Carcinoscorpius rotundicauda (Mangrove horseshoe crab) protein is Coagulogen.